The following is a 413-amino-acid chain: Protein SLX4IP (413 aa).

Residues Lys61, Lys79, Lys167, Lys176, and Lys236 each participate in a glycyl lysine isopeptide (Lys-Gly) (interchain with G-Cter in SUMO2) cross-link. Disordered stretches follow at residues 172-193 (RTKS…VGRS) and 228-300 (SHQE…GSVE). The segment covering 238 to 254 (ENVSQTQPGDTRSQQQL) has biased composition (polar residues). Glycyl lysine isopeptide (Lys-Gly) (interchain with G-Cter in SUMO2) cross-links involve residues Lys288, Lys344, and Lys353. Residues 363 to 413 (SSRHLVTNNPGQAQQSDSAAITEQLATDQGGPSKKRKKLQSYNRGCSGKKN) are disordered. A compositionally biased stretch (polar residues) spans 364–389 (SRHLVTNNPGQAQQSDSAAITEQLAT). Residue Thr389 is modified to Phosphothreonine. Lys396 is covalently cross-linked (Glycyl lysine isopeptide (Lys-Gly) (interchain with G-Cter in SUMO2)).

This sequence belongs to the SLX4IP family. Interacts with SLX4/BTBD12; subunit of different structure-specific endonucleases.

This is Protein SLX4IP (Slx4ip) from Mus musculus (Mouse).